A 90-amino-acid chain; its full sequence is Molybdopterin synthase sulfur carrier subunit (90 aa).

Gly-90 carries the 1-thioglycine; alternate modification. Gly-90 carries the glycyl adenylate; alternate modification.

Belongs to the MoaD family. MOCS2A subfamily. In terms of assembly, heterotetramer; composed of 2 small (Mocs2A) and 2 large (Mocs2B) subunits. In terms of processing, C-terminal thiocarboxylation occurs in 2 steps, it is first acyl-adenylated (-COAMP) via the hesA/moeB/thiF part of MOCS3, then thiocarboxylated (-COSH) via the rhodanese domain of MOCS3.

The protein localises to the cytoplasm. It participates in cofactor biosynthesis; molybdopterin biosynthesis. Acts as a sulfur carrier required for molybdopterin biosynthesis. Component of the molybdopterin synthase complex that catalyzes the conversion of precursor Z into molybdopterin by mediating the incorporation of 2 sulfur atoms into precursor Z to generate a dithiolene group. In the complex, serves as sulfur donor by being thiocarboxylated (-COSH) at its C-terminus by MOCS3. After interaction with Mocs2B, the sulfur is then transferred to precursor Z to form molybdopterin. The chain is Molybdopterin synthase sulfur carrier subunit from Drosophila sechellia (Fruit fly).